We begin with the raw amino-acid sequence, 349 residues long: UDP-3-O-acylglucosamine N-acyltransferase (349 aa).

His-248 (proton acceptor) is an active-site residue.

Belongs to the transferase hexapeptide repeat family. LpxD subfamily. Homotrimer.

It carries out the reaction a UDP-3-O-[(3R)-3-hydroxyacyl]-alpha-D-glucosamine + a (3R)-hydroxyacyl-[ACP] = a UDP-2-N,3-O-bis[(3R)-3-hydroxyacyl]-alpha-D-glucosamine + holo-[ACP] + H(+). It functions in the pathway bacterial outer membrane biogenesis; LPS lipid A biosynthesis. Functionally, catalyzes the N-acylation of UDP-3-O-acylglucosamine using 3-hydroxyacyl-ACP as the acyl donor. Is involved in the biosynthesis of lipid A, a phosphorylated glycolipid that anchors the lipopolysaccharide to the outer membrane of the cell. The sequence is that of UDP-3-O-acylglucosamine N-acyltransferase from Colwellia psychrerythraea (strain 34H / ATCC BAA-681) (Vibrio psychroerythus).